We begin with the raw amino-acid sequence, 155 residues long: Cytochrome c-type biogenesis protein CcmE (155 aa).

Over 1 to 8 (MNPRRKKR) the chain is Cytoplasmic. A helical; Signal-anchor for type II membrane protein transmembrane segment spans residues 9 to 29 (LLITSLLAVALSLAVGLVLFA). The Periplasmic portion of the chain corresponds to 30-155 (LQQNIDLFYT…GMDNFKANNK (126 aa)). Residues H131 and Y135 each contribute to the heme site.

The protein belongs to the CcmE/CycJ family.

The protein localises to the cell inner membrane. In terms of biological role, heme chaperone required for the biogenesis of c-type cytochromes. Transiently binds heme delivered by CcmC and transfers the heme to apo-cytochromes in a process facilitated by CcmF and CcmH. The chain is Cytochrome c-type biogenesis protein CcmE from Psychromonas ingrahamii (strain DSM 17664 / CCUG 51855 / 37).